Consider the following 318-residue polypeptide: MDQDALISKEDSEVEREASGGRESLSDVIGFLDAVLSSEPTDIGGDRSWLHNTINTLQRPGSTHRAKGEGEGEVSTSSTQDNRSGEESRVSGGTSEPEAEAHARNVDKQNIHWATGRGASTDSVPQDLGNGRDSGILEDPPNEGGYPRSGAEDENREMAANPDKRGEDQAEGLPEEIRRSAPLPDEGEGRADNNGRGVESGSPHSARVTGVLVIPSPELEEAVLQRNKRRPANSGSRSLTPVVVPSTRSPPPDHDNSTRSPPRKPPTTQDEHTNPRNTPAVRIKDRRPPTGTRSAPDRPTDGYPTHPGPETDATKKGA.

2 disordered regions span residues 1–24 (MDQDALISKEDSEVEREASGGRES) and 38–318 (SEPT…KKGA). Residues 7 to 20 (ISKEDSEVEREASG) are compositionally biased toward basic and acidic residues. Polar residues predominate over residues 50–61 (LHNTINTLQRPG). Composition is skewed to basic and acidic residues over residues 99–110 (AEAHARNVDKQN) and 150–168 (GAEDENREMAANPDKRGED). Phosphoserine; by host occurs at positions 249, 257, and 260.

This Sendai virus (strain Hamamatsu) (SeV) protein is Protein W (P/V/C).